The chain runs to 397 residues: Odorant receptor 2a (397 aa).

Topologically, residues Met-1–Tyr-38 are cytoplasmic. A helical membrane pass occupies residues Val-39–Ala-59. Residues Arg-60–Glu-72 are Extracellular-facing. A helical transmembrane segment spans residues Asn-73–Met-92. At Val-93–Gln-131 the chain is on the cytoplasmic side. A helical transmembrane segment spans residues Gly-132 to Val-150. The Extracellular segment spans residues Arg-151 to Asn-176. A helical transmembrane segment spans residues Tyr-177–Ala-197. Over Ser-198–Cys-272 the chain is Cytoplasmic. The chain crosses the membrane as a helical span at residues Met-273–Val-293. Residues Ala-294–Ala-301 are Extracellular-facing. Residues Met-302–Phe-322 traverse the membrane as a helical segment. The Cytoplasmic segment spans residues Gly-323–Pro-363. Residues Ser-364–Met-383 traverse the membrane as a helical segment. The Extracellular portion of the chain corresponds to Arg-384–Lys-397.

This sequence belongs to the insect chemoreceptor superfamily. Heteromeric odorant receptor channel (TC 1.A.69) family. Or2a subfamily. Interacts with Orco. Complexes exist early in the endomembrane system in olfactory sensory neurons (OSNs), coupling these complexes to the conserved ciliary trafficking pathway. As to expression, expressed in 20 sensory neurons on the distal edge of the antenna.

The protein resides in the cell membrane. In terms of biological role, odorant receptor which mediates acceptance or avoidance behavior, depending on its substrates. The odorant receptor repertoire encodes a large collection of odor stimuli that vary widely in identity, intensity, and duration. May form a complex with Orco to form odorant-sensing units, providing sensitive and prolonged odorant signaling and calcium permeability. The protein is Odorant receptor 2a (Or2a) of Drosophila melanogaster (Fruit fly).